The primary structure comprises 233 residues: 2,3,4,5-tetrahydropyridine-2,6-dicarboxylate N-acetyltransferase (233 aa).

This sequence belongs to the transferase hexapeptide repeat family. DapH subfamily.

It catalyses the reaction (S)-2,3,4,5-tetrahydrodipicolinate + acetyl-CoA + H2O = L-2-acetamido-6-oxoheptanedioate + CoA. It functions in the pathway amino-acid biosynthesis; L-lysine biosynthesis via DAP pathway; LL-2,6-diaminopimelate from (S)-tetrahydrodipicolinate (acetylase route): step 1/3. Functionally, catalyzes the transfer of an acetyl group from acetyl-CoA to tetrahydrodipicolinate. In Thermosipho africanus (strain TCF52B), this protein is 2,3,4,5-tetrahydropyridine-2,6-dicarboxylate N-acetyltransferase.